The following is a 260-amino-acid chain: KNKRLTKGGKKGAKKKVVDPFSKKDWYDVKAPAMFNIRNIGKTLVTRTQGTKIASDGLKGRVFEVSLADLQNDEVAFRKFKLITEDVQGKNCLTNFHGMDLTRDKMCSMVKKWQTMIEAHVDVKTTDGYLLRLFCVGFTKKRNNQIRKTSYAQHQQVRQIRKKMMEIMTREVQTNDLKEVVNKLIPDSIGKDIEKACQSIYPLHDVFVRKVKMLKKPKFELGKLMELHGEGSSSGKATGDETGAKVERADGYEPPVQESV.

Lysine 30 bears the N6-acetyllysine; alternate mark. Residue lysine 30 forms a Glycyl lysine isopeptide (Lys-Gly) (interchain with G-Cter in SUMO2); alternate linkage. Lysine 52 carries the N6-acetyllysine modification. The residue at position 151 (tyrosine 151) is an ADP-ribosyltyrosine. A disordered region spans residues 228–260 (HGEGSSSGKATGDETGAKVERADGYEPPVQESV). 2 positions are modified to phosphoserine: serine 232 and serine 233. A compositionally biased stretch (basic and acidic residues) spans 238 to 251 (TGDETGAKVERADG). Lysine 245 carries the N6-acetyllysine; alternate modification. A Glycyl lysine isopeptide (Lys-Gly) (interchain with G-Cter in SUMO2); alternate cross-link involves residue lysine 245. Position 252 is a phosphotyrosine (tyrosine 252). Serine 259 carries the phosphoserine modification.

It belongs to the eukaryotic ribosomal protein eS1 family. In terms of assembly, component of the small ribosomal subunit. Mature ribosomes consist of a small (40S) and a large (60S) subunit. The 40S subunit contains about 33 different proteins and 1 molecule of RNA (18S). The 60S subunit contains about 49 different proteins and 3 molecules of RNA (28S, 5.8S and 5S). Identified in a IGF2BP1-dependent mRNP granule complex containing untranslated mRNAs. Binds with high affinity to IPO4. Interacts with DDIT3. Part of the small subunit (SSU) processome, composed of more than 70 proteins and the RNA chaperone small nucleolar RNA (snoRNA) U3. In terms of processing, ADP-ribosylated at Tyr-151 by PARP1 in presence of HPF1.

It is found in the cytoplasm. The protein localises to the nucleus. Its subcellular location is the nucleolus. In terms of biological role, component of the small ribosomal subunit. The ribosome is a large ribonucleoprotein complex responsible for the synthesis of proteins in the cell. Part of the small subunit (SSU) processome, first precursor of the small eukaryotic ribosomal subunit. During the assembly of the SSU processome in the nucleolus, many ribosome biogenesis factors, an RNA chaperone and ribosomal proteins associate with the nascent pre-rRNA and work in concert to generate RNA folding, modifications, rearrangements and cleavage as well as targeted degradation of pre-ribosomal RNA by the RNA exosome. May play a role during erythropoiesis through regulation of transcription factor DDIT3. This Felis catus (Cat) protein is Small ribosomal subunit protein eS1.